We begin with the raw amino-acid sequence, 669 residues long: Probable pectinesterase/pectinesterase inhibitor 21 (669 aa).

A helical membrane pass occupies residues 16–36 (IVITISSVLLISMVVAVTVGV). Asn-52, Asn-81, Asn-94, Asn-281, and Asn-300 each carry an N-linked (GlcNAc...) asparagine glycan. The pectinesterase inhibitor 21 stretch occupies residues 52–205 (NASVKAVKDV…IELTHNGLAI (154 aa)). The pectinesterase 21 stretch occupies residues 255 to 551 (DIVVAQDGSG…FTPAQYIQGD (297 aa)). Substrate-binding residues include Thr-330 and Gln-360. Asp-383 serves as the catalytic Proton donor; for pectinesterase activity. A disulfide bridge connects residues Cys-397 and Cys-417. The active-site Nucleophile; for pectinesterase activity is the Asp-404. An N-linked (GlcNAc...) asparagine glycan is attached at Asn-416. Substrate is bound by residues Arg-472 and Trp-474. The disordered stretch occupies residues 615–669 (AYTGTASPESSIKVSSSTETASPESSFTEASTASPESSIMVASTESSGSFFSMFT). Residues 616–628 (YTGTASPESSIKV) show a composition bias toward polar residues. Residues 629–652 (SSSTETASPESSFTEASTASPESS) show a composition bias toward low complexity. Polar residues predominate over residues 654–669 (MVASTESSGSFFSMFT).

It in the N-terminal section; belongs to the PMEI family. The protein in the C-terminal section; belongs to the pectinesterase family. In terms of tissue distribution, expressed in flower buds.

It localises to the membrane. The catalysed reaction is [(1-&gt;4)-alpha-D-galacturonosyl methyl ester](n) + n H2O = [(1-&gt;4)-alpha-D-galacturonosyl](n) + n methanol + n H(+). It functions in the pathway glycan metabolism; pectin degradation; 2-dehydro-3-deoxy-D-gluconate from pectin: step 1/5. Acts in the modification of cell walls via demethylesterification of cell wall pectin. The sequence is that of Probable pectinesterase/pectinesterase inhibitor 21 (PME21) from Arabidopsis thaliana (Mouse-ear cress).